The following is a 500-amino-acid chain: ATP synthase subunit alpha (500 aa).

169 to 176 (GDRQTGKT) provides a ligand contact to ATP.

It belongs to the ATPase alpha/beta chains family. In terms of assembly, F-type ATPases have 2 components, CF(1) - the catalytic core - and CF(0) - the membrane proton channel. CF(1) has five subunits: alpha(3), beta(3), gamma(1), delta(1), epsilon(1). CF(0) has three main subunits: a(1), b(2) and c(9-12). The alpha and beta chains form an alternating ring which encloses part of the gamma chain. CF(1) is attached to CF(0) by a central stalk formed by the gamma and epsilon chains, while a peripheral stalk is formed by the delta and b chains.

The protein localises to the cell inner membrane. It carries out the reaction ATP + H2O + 4 H(+)(in) = ADP + phosphate + 5 H(+)(out). Produces ATP from ADP in the presence of a proton gradient across the membrane. The alpha chain is a regulatory subunit. The protein is ATP synthase subunit alpha of Fusobacterium nucleatum subsp. nucleatum (strain ATCC 25586 / DSM 15643 / BCRC 10681 / CIP 101130 / JCM 8532 / KCTC 2640 / LMG 13131 / VPI 4355).